The sequence spans 346 residues: MQLSDFDFDLPERLIATRPARPRTAARLLLAEGDRIEDRHVRDLVGIFRPGDRLVLNNTRVIPARLTGTRTRGEAEARIEVTLMEPAAAGGWRAMAKPLRKLKPGETIRFSDALSAEVAEKGETDLRLVFDRAGAAFDAALADAGAMPLPPYIAARRAPDAQDDEDYQTVFARHAGAVAAPTASLHFDRPLLEALAARGVGFTEVTLHVGAGTFLPVKVEDVTTHRMHAEWGEVTEAAAAEIAATKAAGGRVIPVGTTALRLIESAAASGAIRPWRGETDIFIYPGYRFRVTDALMTNFHLPKSTLLMLVSALMGQERIRAIYDHAVRHDYRFFSYGDASLLIPGG.

The protein belongs to the QueA family. Monomer.

It localises to the cytoplasm. The catalysed reaction is 7-aminomethyl-7-carbaguanosine(34) in tRNA + S-adenosyl-L-methionine = epoxyqueuosine(34) in tRNA + adenine + L-methionine + 2 H(+). It participates in tRNA modification; tRNA-queuosine biosynthesis. Its function is as follows. Transfers and isomerizes the ribose moiety from AdoMet to the 7-aminomethyl group of 7-deazaguanine (preQ1-tRNA) to give epoxyqueuosine (oQ-tRNA). This chain is S-adenosylmethionine:tRNA ribosyltransferase-isomerase, found in Cereibacter sphaeroides (strain KD131 / KCTC 12085) (Rhodobacter sphaeroides).